The primary structure comprises 104 residues: Large ribosomal subunit protein uL24 (104 aa).

It belongs to the universal ribosomal protein uL24 family. In terms of assembly, part of the 50S ribosomal subunit.

One of two assembly initiator proteins, it binds directly to the 5'-end of the 23S rRNA, where it nucleates assembly of the 50S subunit. Its function is as follows. One of the proteins that surrounds the polypeptide exit tunnel on the outside of the subunit. The protein is Large ribosomal subunit protein uL24 of Yersinia pseudotuberculosis serotype O:1b (strain IP 31758).